Here is a 269-residue protein sequence, read N- to C-terminus: Oligoribonuclease, mitochondrial (269 aa).

The 173-residue stretch at leucine 55–leucine 227 folds into the Exonuclease domain. Tyrosine 184 is a catalytic residue. The interval glutamate 240 to phenylalanine 269 is disordered. The span at glutamate 245–serine 261 shows a compositional bias: low complexity.

This sequence belongs to the oligoribonuclease family.

It is found in the mitochondrion. Functionally, 3'-to-5' exoribonuclease specific for small oligoribonucleotides. The chain is Oligoribonuclease, mitochondrial (REX2) from Saccharomyces cerevisiae (strain ATCC 204508 / S288c) (Baker's yeast).